The following is a 66-amino-acid chain: Putative ankyrin repeat protein RF_pd14 (66 aa).

One copy of the ANK repeat lies at 14–66 (KLNQKLMRAAATGDIEAVQKLVLRGADIYCRDHQGDTALSLAAGSGYLDILDI).

This chain is Putative ankyrin repeat protein RF_pd14, found in Rickettsia felis (strain ATCC VR-1525 / URRWXCal2) (Rickettsia azadi).